Consider the following 689-residue polypeptide: Glycine--tRNA ligase beta subunit (689 aa).

Belongs to the class-II aminoacyl-tRNA synthetase family. As to quaternary structure, tetramer of two alpha and two beta subunits.

The protein localises to the cytoplasm. The catalysed reaction is tRNA(Gly) + glycine + ATP = glycyl-tRNA(Gly) + AMP + diphosphate. The polypeptide is Glycine--tRNA ligase beta subunit (Salmonella heidelberg (strain SL476)).